The following is a 338-amino-acid chain: Ketol-acid reductoisomerase (NADP(+)) (338 aa).

A KARI N-terminal Rossmann domain is found at 1-181 (MKVFYDKDCD…GGGRTGIIET (181 aa)). NADP(+)-binding positions include 24 to 27 (YGSQ), Arg47, Ser50, Thr52, and 82 to 85 (DEFQ). Residue His107 is part of the active site. Gly133 contacts NADP(+). The KARI C-terminal knotted domain maps to 182–327 (TFKDETETDL…EQLRSMMPWI (146 aa)). The Mg(2+) site is built by Asp190, Glu194, Glu226, and Glu230. Residue Ser251 participates in substrate binding.

The protein belongs to the ketol-acid reductoisomerase family. It depends on Mg(2+) as a cofactor.

It carries out the reaction (2R)-2,3-dihydroxy-3-methylbutanoate + NADP(+) = (2S)-2-acetolactate + NADPH + H(+). The catalysed reaction is (2R,3R)-2,3-dihydroxy-3-methylpentanoate + NADP(+) = (S)-2-ethyl-2-hydroxy-3-oxobutanoate + NADPH + H(+). The protein operates within amino-acid biosynthesis; L-isoleucine biosynthesis; L-isoleucine from 2-oxobutanoate: step 2/4. Its pathway is amino-acid biosynthesis; L-valine biosynthesis; L-valine from pyruvate: step 2/4. In terms of biological role, involved in the biosynthesis of branched-chain amino acids (BCAA). Catalyzes an alkyl-migration followed by a ketol-acid reduction of (S)-2-acetolactate (S2AL) to yield (R)-2,3-dihydroxy-isovalerate. In the isomerase reaction, S2AL is rearranged via a Mg-dependent methyl migration to produce 3-hydroxy-3-methyl-2-ketobutyrate (HMKB). In the reductase reaction, this 2-ketoacid undergoes a metal-dependent reduction by NADPH to yield (R)-2,3-dihydroxy-isovalerate. The sequence is that of Ketol-acid reductoisomerase (NADP(+)) from Pseudomonas putida (strain W619).